The chain runs to 311 residues: Glycine-betaine-binding protein (311 aa).

The first 23 residues, 1–23 (MNRLIRSLCLACAGLFAAGLAQA), serve as a signal peptide directing secretion.

Belongs to the OsmX family.

Its subcellular location is the periplasm. In terms of biological role, binds glycine-betaine. This Pseudomonas aeruginosa (strain ATCC 15692 / DSM 22644 / CIP 104116 / JCM 14847 / LMG 12228 / 1C / PRS 101 / PAO1) protein is Glycine-betaine-binding protein.